A 569-amino-acid chain; its full sequence is Alpha-keto-acid decarboxylase (569 aa).

Position 57 (Glu57) interacts with thiamine diphosphate. Residues 392–474 form a thiamine pyrophosphate binding region; sequence TAFYGMVEHR…VVVNNDGYTI (83 aa). 3 residues coordinate Mg(2+): Asp442, Asn469, and Gly471.

This sequence belongs to the TPP enzyme family. It depends on a metal cation as a cofactor. Thiamine diphosphate serves as cofactor.

Functionally, decarboxylates branched-chain and aromatic alpha-keto acids to aldehydes. The polypeptide is Alpha-keto-acid decarboxylase (kdc) (Mycobacterium leprae (strain TN)).